The following is an 86-amino-acid chain: UPF0297 protein SSP1144 (86 aa).

This sequence belongs to the UPF0297 family.

This is UPF0297 protein SSP1144 from Staphylococcus saprophyticus subsp. saprophyticus (strain ATCC 15305 / DSM 20229 / NCIMB 8711 / NCTC 7292 / S-41).